The following is a 248-amino-acid chain: NADP-dependent 3-hydroxy acid dehydrogenase YdfG (248 aa).

NADP(+) is bound by residues 7-12 (GATAGF), 32-33 (RR), 54-55 (DV), and asparagine 81. Residue serine 134 participates in substrate binding. NADP(+) contacts are provided by residues tyrosine 147, lysine 151, and 177–185 (PGLVGGTEF). The active-site Proton acceptor is tyrosine 147.

It belongs to the short-chain dehydrogenases/reductases (SDR) family. Homotetramer.

The enzyme catalyses 3-hydroxypropanoate + NADP(+) = 3-oxopropanoate + NADPH + H(+). It carries out the reaction L-allo-threonine + NADP(+) = aminoacetone + CO2 + NADPH. Its function is as follows. NADP-dependent dehydrogenase with broad substrate specificity acting on 3-hydroxy acids. Catalyzes the NADP-dependent oxidation of L-allo-threonine to L-2-amino-3-keto-butyrate, which is spontaneously decarboxylated into aminoacetone. Also acts on D-threonine, L-serine, D-serine, D-3-hydroxyisobutyrate, L-3-hydroxyisobutyrate, D-glycerate and L-glycerate. Able to catalyze the reduction of the malonic semialdehyde to 3-hydroxypropionic acid. YdfG is apparently supplementing RutE, the presumed malonic semialdehyde reductase involved in pyrimidine degradation since both are able to detoxify malonic semialdehyde. The chain is NADP-dependent 3-hydroxy acid dehydrogenase YdfG from Escherichia coli O6:H1 (strain CFT073 / ATCC 700928 / UPEC).